We begin with the raw amino-acid sequence, 437 residues long: Glutamyl-tRNA reductase (437 aa).

Residues 49–52, serine 109, 114–116, and glutamine 120 contribute to the substrate site; these read TCNR and EVQ. Cysteine 50 (nucleophile) is an active-site residue. 189–194 contributes to the NADP(+) binding site; the sequence is GAGDTA.

Belongs to the glutamyl-tRNA reductase family. In terms of assembly, homodimer.

It catalyses the reaction (S)-4-amino-5-oxopentanoate + tRNA(Glu) + NADP(+) = L-glutamyl-tRNA(Glu) + NADPH + H(+). It participates in porphyrin-containing compound metabolism; protoporphyrin-IX biosynthesis; 5-aminolevulinate from L-glutamyl-tRNA(Glu): step 1/2. Its pathway is porphyrin-containing compound metabolism; chlorophyll biosynthesis. Functionally, catalyzes the NADPH-dependent reduction of glutamyl-tRNA(Glu) to glutamate 1-semialdehyde (GSA). The polypeptide is Glutamyl-tRNA reductase (Chloroherpeton thalassium (strain ATCC 35110 / GB-78)).